The chain runs to 361 residues: Ribosomal RNA large subunit methyltransferase M (361 aa).

Residues Ser-187, 220–223, Asp-239, Asp-259, and Asp-276 each bind S-adenosyl-L-methionine; that span reads CPGG. Residue Lys-305 is the Proton acceptor of the active site.

This sequence belongs to the class I-like SAM-binding methyltransferase superfamily. RNA methyltransferase RlmE family. RlmM subfamily. As to quaternary structure, monomer.

Its subcellular location is the cytoplasm. It catalyses the reaction cytidine(2498) in 23S rRNA + S-adenosyl-L-methionine = 2'-O-methylcytidine(2498) in 23S rRNA + S-adenosyl-L-homocysteine + H(+). Functionally, catalyzes the 2'-O-methylation at nucleotide C2498 in 23S rRNA. This is Ribosomal RNA large subunit methyltransferase M from Shewanella amazonensis (strain ATCC BAA-1098 / SB2B).